Consider the following 221-residue polypeptide: Iron-sulfur cluster repair protein YtfE (221 aa).

The protein belongs to the RIC family. YtfE subfamily. Homodimer.

The protein localises to the cytoplasm. Its function is as follows. Di-iron-containing protein involved in the repair of iron-sulfur clusters damaged by oxidative and nitrosative stress conditions. In Pectobacterium atrosepticum (strain SCRI 1043 / ATCC BAA-672) (Erwinia carotovora subsp. atroseptica), this protein is Iron-sulfur cluster repair protein YtfE.